The chain runs to 254 residues: Alcohol dehydrogenase (254 aa).

Residue 10 to 33 coordinates NAD(+); it reads FVAGLGGIGFDTSREIVKSGPKNL. Residue Ser138 coordinates substrate. The active-site Proton acceptor is Tyr151.

This sequence belongs to the short-chain dehydrogenases/reductases (SDR) family. In terms of assembly, homodimer.

The enzyme catalyses a primary alcohol + NAD(+) = an aldehyde + NADH + H(+). The catalysed reaction is a secondary alcohol + NAD(+) = a ketone + NADH + H(+). The polypeptide is Alcohol dehydrogenase (Adh) (Drosophila mayaguana (Fruit fly)).